We begin with the raw amino-acid sequence, 927 residues long: Probable dipeptidyl-aminopeptidase B (927 aa).

Disordered stretches follow at residues methionine 1–isoleucine 44 and glycine 58–glycine 101. Topologically, residues methionine 1–arginine 108 are cytoplasmic. 2 stretches are compositionally biased toward basic and acidic residues: residues histidine 19–glutamate 36 and glycine 58–glutamate 70. Residues threonine 109–valine 129 form a helical; Signal-anchor for type II membrane protein membrane-spanning segment. The Vacuolar segment spans residues serine 130–leucine 927. Asparagine 365 and asparagine 530 each carry an N-linked (GlcNAc...) asparagine glycan. Catalysis depends on serine 769, which acts as the Charge relay system. A glycan (N-linked (GlcNAc...) asparagine) is linked at asparagine 828. Active-site charge relay system residues include aspartate 846 and histidine 879.

This sequence belongs to the peptidase S9B family.

It localises to the vacuole membrane. The enzyme catalyses Release of an N-terminal dipeptide, Xaa-Yaa-|-Zaa-, from a polypeptide, preferentially when Yaa is Pro, provided Zaa is neither Pro nor hydroxyproline.. In terms of biological role, type IV dipeptidyl-peptidase which removes N-terminal dipeptides sequentially from polypeptides having unsubstituted N-termini provided that the penultimate residue is proline. The sequence is that of Probable dipeptidyl-aminopeptidase B (DAPB) from Podospora anserina (strain S / ATCC MYA-4624 / DSM 980 / FGSC 10383) (Pleurage anserina).